Reading from the N-terminus, the 317-residue chain is Ribosomal RNA small subunit methyltransferase A (317 aa).

S-adenosyl-L-methionine-binding residues include Asn-37, Val-39, Gly-64, Glu-85, Asp-115, and Asn-134. The disordered stretch occupies residues Gly-293 to Ser-317.

Belongs to the class I-like SAM-binding methyltransferase superfamily. rRNA adenine N(6)-methyltransferase family. RsmA subfamily.

The protein localises to the cytoplasm. The catalysed reaction is adenosine(1518)/adenosine(1519) in 16S rRNA + 4 S-adenosyl-L-methionine = N(6)-dimethyladenosine(1518)/N(6)-dimethyladenosine(1519) in 16S rRNA + 4 S-adenosyl-L-homocysteine + 4 H(+). In terms of biological role, specifically dimethylates two adjacent adenosines (A1518 and A1519) in the loop of a conserved hairpin near the 3'-end of 16S rRNA in the 30S particle. May play a critical role in biogenesis of 30S subunits. The polypeptide is Ribosomal RNA small subunit methyltransferase A (Mycobacterium bovis (strain BCG / Tokyo 172 / ATCC 35737 / TMC 1019)).